Consider the following 285-residue polypeptide: Small ribosomal subunit protein uS5x (285 aa).

Basic and acidic residues predominate over residues 1–19 (MAERGGERGVERGGERGDF). A disordered region spans residues 1-51 (MAERGGERGVERGGERGDFGRGFGGRGGRGDRGGRGRGGRGGRRGGRASEE). Positions 35-46 (RGRGGRGGRRGG) are enriched in basic residues. The 64-residue stretch at 96–159 (LKDEVMKIMP…ILAKLSVVPV (64 aa)) folds into the S5 DRBM domain.

This sequence belongs to the universal ribosomal protein uS5 family. Interacts with MBD6.

In terms of biological role, component of the ribosome, a large ribonucleoprotein complex responsible for the synthesis of proteins in the cell. The small ribosomal subunit (SSU) binds messenger RNAs (mRNAs) and translates the encoded message by selecting cognate aminoacyl-transfer RNA (tRNA) molecules. The large subunit (LSU) contains the ribosomal catalytic site termed the peptidyl transferase center (PTC), which catalyzes the formation of peptide bonds, thereby polymerizing the amino acids delivered by tRNAs into a polypeptide chain. The nascent polypeptides leave the ribosome through a tunnel in the LSU and interact with protein factors that function in enzymatic processing, targeting, and the membrane insertion of nascent chains at the exit of the ribosomal tunnel. Plays a role in the assembly and function of the 40S ribosomal subunit. Mutations in this protein affects the control of translational fidelity. Involved in nucleolar processing of pre-18S ribosomal RNA and ribosome assembly. Also involved in RNA-directed DNA methylation (RdDM). This chain is Small ribosomal subunit protein uS5x, found in Arabidopsis thaliana (Mouse-ear cress).